Consider the following 132-residue polypeptide: Large ribosomal subunit protein uL14 (132 aa).

The protein belongs to the universal ribosomal protein uL14 family. As to quaternary structure, part of the 50S ribosomal subunit. Forms a cluster with proteins L3 and L24e, part of which may contact the 16S rRNA in 2 intersubunit bridges.

Binds to 23S rRNA. Forms part of two intersubunit bridges in the 70S ribosome. The sequence is that of Large ribosomal subunit protein uL14 from Methanobrevibacter smithii (strain ATCC 35061 / DSM 861 / OCM 144 / PS).